Consider the following 137-residue polypeptide: Large ribosomal subunit protein uL16 (137 aa).

The protein belongs to the universal ribosomal protein uL16 family. Part of the 50S ribosomal subunit.

Functionally, binds 23S rRNA and is also seen to make contacts with the A and possibly P site tRNAs. The chain is Large ribosomal subunit protein uL16 from Pseudomonas paraeruginosa (strain DSM 24068 / PA7) (Pseudomonas aeruginosa (strain PA7)).